A 577-amino-acid polypeptide reads, in one-letter code: E3 ubiquitin-protein ligase MSL2 (577 aa).

The tract at residues 1–116 is sufficient for interaction with MSL1; that stretch reads MNPVNATALY…CEYITQTTLA (116 aa). The Zn(2+) site is built by Cys-44, Cys-47, Cys-62, His-64, Cys-67, Cys-70, Cys-81, and Cys-84. The RING-type zinc-finger motif lies at 44–85; sequence CCVCGHLLQDPIAPTNSTCQHYVCKTCKGKKMMMKPSCSWCK. A Glycyl lysine isopeptide (Lys-Gly) (interchain with G-Cter in SUMO2) cross-link involves residue Lys-375. The interval 405–427 is disordered; sequence TKSMKKSHEHGSKKSHSKTKPGI. A compositionally biased stretch (basic residues) spans 407 to 423; that stretch reads SMKKSHEHGSKKSHSKT. Ser-447 is subject to Phosphoserine. The 52-residue stretch at 457-508 folds into the CXC MSL2-type domain; the sequence is QEKKGCKCGRATQNPSVLTCRGQRCPCYSNRKACLDCICRGCQNSYMANGEK. The Zn(2+) site is built by Cys-462, Cys-464, Cys-476, Cys-481, Cys-483, Cys-490, Cys-493, Cys-495, and Cys-498.

Belongs to the MSL2 family. Component of a multisubunit histone acetyltransferase complex (MSL) at least composed of the KAT8/MOF/MYST1, MSL1/hampin, MSL2 and MSL3. Forms a MSL heterotetrameric core with MSL1.

It localises to the nucleus. It is found in the chromosome. It catalyses the reaction S-ubiquitinyl-[E2 ubiquitin-conjugating enzyme]-L-cysteine + [acceptor protein]-L-lysine = [E2 ubiquitin-conjugating enzyme]-L-cysteine + N(6)-ubiquitinyl-[acceptor protein]-L-lysine.. It functions in the pathway protein modification; protein ubiquitination. Non-catalytic component of the MSL histone acetyltransferase complex, a multiprotein complex that mediates the majority of histone H4 acetylation at 'Lys-16' (H4K16ac), an epigenetic mark that prevents chromatin compaction. The MSL complex is required for chromosome stability and genome integrity by maintaining homeostatic levels of H4K16ac. The MSL complex is also involved in gene dosage by promoting up-regulation of genes expressed by the X chromosome. X up-regulation is required to compensate for autosomal biallelic expression. The MSL complex also participates in gene dosage compensation by promoting expression of Tsix non-coding RNA. MSL2 plays a key role in gene dosage by ensuring biallelic expression of a subset of dosage-sensitive genes, including many haploinsufficient genes. Acts by promoting promoter-enhancer contacts, thereby preventing DNA methylation of one allele and creating a methylation-free environment for methylation-sensitive transcription factors such as SP1, KANSL1 and KANSL3. Also acts as an E3 ubiquitin ligase that promotes monoubiquitination of histone H2B at 'Lys-35' (H2BK34Ub), but not that of H2A. This activity is greatly enhanced by heterodimerization with MSL1. H2B ubiquitination in turn stimulates histone H3 methylation at 'Lys-4' (H3K4me) and 'Lys-79' (H3K79me) and leads to gene activation, including that of HOXA9 and MEIS1. Also involved in the DNA damage response by mediating ubiquitination of TP53/p53 and TP53BP1. This chain is E3 ubiquitin-protein ligase MSL2, found in Homo sapiens (Human).